Consider the following 235-residue polypeptide: Uracil-DNA glycosylase (235 aa).

The active-site Proton acceptor is Asp-71.

The protein belongs to the uracil-DNA glycosylase (UDG) superfamily. UNG family.

It is found in the cytoplasm. The enzyme catalyses Hydrolyzes single-stranded DNA or mismatched double-stranded DNA and polynucleotides, releasing free uracil.. Its function is as follows. Excises uracil residues from the DNA which can arise as a result of misincorporation of dUMP residues by DNA polymerase or due to deamination of cytosine. The sequence is that of Uracil-DNA glycosylase from Helicobacter hepaticus (strain ATCC 51449 / 3B1).